Here is a 213-residue protein sequence, read N- to C-terminus: FMN-dependent NADH:quinone oxidoreductase (213 aa).

Position 17-19 (17-19) interacts with FMN; the sequence is SSS.

Belongs to the azoreductase type 1 family. In terms of assembly, homodimer. The cofactor is FMN.

It carries out the reaction 2 a quinone + NADH + H(+) = 2 a 1,4-benzosemiquinone + NAD(+). It catalyses the reaction N,N-dimethyl-1,4-phenylenediamine + anthranilate + 2 NAD(+) = 2-(4-dimethylaminophenyl)diazenylbenzoate + 2 NADH + 2 H(+). Functionally, quinone reductase that provides resistance to thiol-specific stress caused by electrophilic quinones. Also exhibits azoreductase activity. Catalyzes the reductive cleavage of the azo bond in aromatic azo compounds to the corresponding amines. The sequence is that of FMN-dependent NADH:quinone oxidoreductase from Ruminiclostridium cellulolyticum (strain ATCC 35319 / DSM 5812 / JCM 6584 / H10) (Clostridium cellulolyticum).